Reading from the N-terminus, the 68-residue chain is Prokaryotic ubiquitin-like protein Pup (68 aa).

The interval 1–37 (MAQERIFGTGSRREDEPDTPAPVDPPVSGAAQAQRDM) is disordered. The segment at 24–62 (DPPVSGAAQAQRDMQGTDDLLAEIDGVLETNAEAFVKGF) is ARC ATPase binding. The residue at position 68 (glutamine 68) is a Deamidated glutamine. Glutamine 68 participates in a covalent cross-link: Isoglutamyl lysine isopeptide (Gln-Lys) (interchain with K-? in acceptor proteins).

This sequence belongs to the prokaryotic ubiquitin-like protein family. As to quaternary structure, strongly interacts with the proteasome-associated ATPase ARC through a hydrophobic interface; the interacting region of Pup lies in its C-terminal half. There is one Pup binding site per ARC hexamer ring. Post-translationally, is modified by deamidation of its C-terminal glutamine to glutamate by the deamidase Dop, a prerequisite to the subsequent pupylation process.

The protein operates within protein degradation; proteasomal Pup-dependent pathway. In terms of biological role, protein modifier that is covalently attached to lysine residues of substrate proteins, thereby targeting them for proteasomal degradation. The tagging system is termed pupylation. The sequence is that of Prokaryotic ubiquitin-like protein Pup from Kocuria rhizophila (strain ATCC 9341 / DSM 348 / NBRC 103217 / DC2201).